Here is an 89-residue protein sequence, read N- to C-terminus: Small ribosomal subunit protein uS15 (89 aa).

The protein belongs to the universal ribosomal protein uS15 family. In terms of assembly, part of the 30S ribosomal subunit. Forms a bridge to the 50S subunit in the 70S ribosome, contacting the 23S rRNA.

In terms of biological role, one of the primary rRNA binding proteins, it binds directly to 16S rRNA where it helps nucleate assembly of the platform of the 30S subunit by binding and bridging several RNA helices of the 16S rRNA. Its function is as follows. Forms an intersubunit bridge (bridge B4) with the 23S rRNA of the 50S subunit in the ribosome. The sequence is that of Small ribosomal subunit protein uS15 from Caulobacter vibrioides (strain NA1000 / CB15N) (Caulobacter crescentus).